A 538-amino-acid chain; its full sequence is Nicotinate phosphoribosyltransferase (538 aa).

Nicotinate is bound by residues Tyr21 and Thr210. Residue His213 is modified to Phosphohistidine. Arg318 lines the nicotinate pocket. Thr380 lines the 5-phospho-alpha-D-ribose 1-diphosphate pocket. Ser537 carries the phosphoserine modification.

Belongs to the NAPRTase family. In terms of assembly, homodimer. Mg(2+) is required as a cofactor. Mn(2+) serves as cofactor. Transiently phosphorylated on a His residue during the reaction cycle. Phosphorylation strongly increases the affinity for substrates and increases the rate of nicotinate D-ribonucleotide production. Dephosphorylation regenerates the low-affinity form of the enzyme, leading to product release.

Its subcellular location is the cytoplasm. The protein resides in the cytosol. It catalyses the reaction nicotinate + 5-phospho-alpha-D-ribose 1-diphosphate + ATP + H2O = nicotinate beta-D-ribonucleotide + ADP + phosphate + diphosphate. Its pathway is cofactor biosynthesis; NAD(+) biosynthesis; nicotinate D-ribonucleotide from nicotinate: step 1/1. In terms of biological role, catalyzes the first step in the biosynthesis of NAD from nicotinic acid, the ATP-dependent synthesis of beta-nicotinate D-ribonucleotide from nicotinate and 5-phospho-D-ribose 1-phosphate. Helps prevent cellular oxidative stress via its role in NAD biosynthesis. In Homo sapiens (Human), this protein is Nicotinate phosphoribosyltransferase (NAPRT).